We begin with the raw amino-acid sequence, 21 residues long: Sarafotoxin-D (21 aa).

Intrachain disulfides connect C1-C15 and C3-C11.

This sequence belongs to the endothelin/sarafotoxin family. As to expression, expressed by the venom gland.

The protein localises to the secreted. In terms of biological role, vasoconstrictor activity. These toxins cause cardiac arrest probably as a result of coronary vasospasm. May act by displaying agonistic activities towards endothelin-1 and -2 receptors (EDNRA and EDNRB). This is Sarafotoxin-D from Atractaspis engaddensis (Israeli burrowing asp).